The sequence spans 440 residues: Probable D-serine dehydratase (440 aa).

Lys-111 bears the N6-(pyridoxal phosphate)lysine mark.

The protein belongs to the serine/threonine dehydratase family. DsdA subfamily. Pyridoxal 5'-phosphate is required as a cofactor.

It catalyses the reaction D-serine = pyruvate + NH4(+). In Rhizobium leguminosarum bv. trifolii (strain WSM2304), this protein is Probable D-serine dehydratase.